We begin with the raw amino-acid sequence, 222 residues long: Leucyl/phenylalanyl-tRNA--protein transferase (222 aa).

The protein belongs to the L/F-transferase family.

It localises to the cytoplasm. The catalysed reaction is N-terminal L-lysyl-[protein] + L-leucyl-tRNA(Leu) = N-terminal L-leucyl-L-lysyl-[protein] + tRNA(Leu) + H(+). It carries out the reaction N-terminal L-arginyl-[protein] + L-leucyl-tRNA(Leu) = N-terminal L-leucyl-L-arginyl-[protein] + tRNA(Leu) + H(+). It catalyses the reaction L-phenylalanyl-tRNA(Phe) + an N-terminal L-alpha-aminoacyl-[protein] = an N-terminal L-phenylalanyl-L-alpha-aminoacyl-[protein] + tRNA(Phe). Functionally, functions in the N-end rule pathway of protein degradation where it conjugates Leu, Phe and, less efficiently, Met from aminoacyl-tRNAs to the N-termini of proteins containing an N-terminal arginine or lysine. This is Leucyl/phenylalanyl-tRNA--protein transferase from Legionella pneumophila (strain Corby).